The chain runs to 57 residues: Large ribosomal subunit protein bL32 (57 aa).

The segment at 1–23 (MAVPKKKTSKSKRDKRRATWRHK) is disordered.

This sequence belongs to the bacterial ribosomal protein bL32 family.

The protein is Large ribosomal subunit protein bL32 of Trichormus variabilis (strain ATCC 29413 / PCC 7937) (Anabaena variabilis).